We begin with the raw amino-acid sequence, 263 residues long: H-2 class II histocompatibility antigen, A-U beta chain (263 aa).

The N-terminal stretch at 1 to 27 (MALQIPSLLLLAAVVVLMVLSSPGTEG) is a signal peptide. The segment at 28 to 120 (GDSERHFVVQ…TEVPTSLRRL (93 aa)) is beta-1. Topologically, residues 28 to 224 (GDSERHFVVQ…RAQSESARSK (197 aa)) are extracellular. 2 disulfides stabilise this stretch: Cys42–Cys104 and Cys143–Cys199. N-linked (GlcNAc...) asparagine glycosylation is present at Asn46. The interval 121 to 214 (EQPNVVISLS…SLKSPITVEW (94 aa)) is beta-2. Residues 123–211 (PNVVISLSRT…EHPSLKSPIT (89 aa)) form the Ig-like C1-type domain. The tract at residues 215–224 (RAQSESARSK) is connecting peptide. A helical transmembrane segment spans residues 225–245 (MLSGIGGCVLGVIFLGLGLFI). Residues 246 to 263 (RHRSQKGPRGPPPAGLLQ) lie on the Cytoplasmic side of the membrane.

This sequence belongs to the MHC class II family.

It is found in the membrane. The polypeptide is H-2 class II histocompatibility antigen, A-U beta chain (Mus musculus (Mouse)).